The following is a 646-amino-acid chain: Amyloid beta A4 precursor protein-binding family B member 1-interacting protein (646 aa).

Residues 82–141 form a disordered region; the sequence is FATERDTSKGSVPVAPAPSKPQSNFSLPASFDSSKPATSSNSIAAPPPPPAFKPSKEEEE. The span at 101–116 shows a compositional bias: polar residues; it reads KPQSNFSLPASFDSSK. Residues 162–248 form the Ras-associating domain; sequence KKLVVKVEIT…NKVLFQEKKH (87 aa). Residues 292–401 form the PH domain; that stretch reads VPDLEGVLYL…WVTGIRVAKY (110 aa). The disordered stretch occupies residues 420–646; the sequence is ASWANRTIQA…NAMQKKRTQP (227 aa). The segment covering 429–445 has biased composition (low complexity); the sequence is ASSTASTPSPTPKAKAA. 4 stretches are compositionally biased toward pro residues: residues 465 to 500, 509 to 536, 560 to 577, and 584 to 598; these read LPPP…PPVP, FPPP…PPPE, LPPP…PPPA, and APPP…PAPA.

This sequence belongs to the MRL family.

The protein localises to the cell membrane. The protein resides in the cytoplasm. It localises to the cytoskeleton. Functionally, appears to function in the signal transduction from Ras activation to actin cytoskeletal remodeling. The chain is Amyloid beta A4 precursor protein-binding family B member 1-interacting protein (apbb1ip) from Danio rerio (Zebrafish).